The chain runs to 784 residues: MPRALWTAWVWAVIILSMEGASHQASSLSCDPTGVCDGHSRSLNSIPSGLTDGVKSLDLSNNEITYVSNRDLQRCVNLKTLRLGANEIHTVEEDSFFHLRNLEYLDLSYNRLSNLSSSWFRSLYALKFLNLLGNVYKTLGETSLFSHLPNLRTLKVGNSNSFTEIHEKDFTGLIFLEELEISAQNLQIYVPKSLKSIQNISHLILHLKQPVLLVDILVDIVSSLDCLELRDTNLHTFHFSEASISEMNTSVKKLIFRNVQFTDESFVEVVKLFNYVSGILEVEFDDCTHDGIGDFRALSLDRIRHLGNVETLTIRKLHIPQFFLFHDLSSIYPLTGKVKRVTIESSKVFLVPCLLSQHLKSLEYLDLSENLMSEETLKNSACKDAWPFLQTLVLRQNRLKSLEKTGELLLTLENLNNLDISKNNFLSMPETCRWPGKMKQLNLSSTRVHSLTQCLPQTLEILDVSNNNLDSFSLILPQLKELYISRNKLKTLPDASFLPVLSVMRISRNIINTFSKEQLDSFQQLKTLEAGGNNFICSCDFLSFTQGQQALGRVLVDWPAEYRCDSPSHVRGQRVQDARLSLSECHRAAVVSAACCALFLLLLLTGVLCHRFHGLWYMKMMWAWLQAKRKPRKAPRRDICYDAFVSYSEQDSYWVENLMVQELEHFNPPFKLCLHKRDFIPGKWIIDNIIDSIEKSHKTIFVLSENFVKSEWCKYELDFSHFRLFDENNDAAILILLEPIDKKAIPQRFCKLRKIMNTKTYLEWPVDETQQEGFWLNLRAAIRS.

The signal sequence occupies residues 1 to 20; that stretch reads MPRALWTAWVWAVIILSMEG. Over 21–587 the chain is Extracellular; the sequence is ASHQASSLSC…ARLSLSECHR (567 aa). Cysteines 30 and 36 form a disulfide. LRR repeat units follow at residues 54–77, 78–101, 102–125, 126–150, 151–175, 176–199, 200–223, 224–250, 251–278, 279–308, 309–337, 338–361, 362–388, 389–414, 415–437, 438–457, 458–478, 479–500, and 501–524; these read VKSLDLSNNEITYVSNRDLQRCVN, LKTLRLGANEIHTVEEDSFFHLRN, LEYLDLSYNRLSNLSSSWFRSLYA, LKFLNLLGNVYKTLGETSLFSHLPN, LRTLKVGNSNSFTEIHEKDFTGLIF, LEELEISAQNLQIYVPKSLKSIQN, ISHLILHLKQPVLLVDILVDIVSS, LDCLELRDTNLHTFHFSEASISEMNTS, VKKLIFRNVQFTDESFVEVVKLFNYVSG, ILEVEFDDCTHDGIGDFRALSLDRIRHLGN, VETLTIRKLHIPQFFLFHDLSSIYPLTGK, VKRVTIESSKVFLVPCLLSQHLKS, LEYLDLSENLMSEETLKNSACKDAWPF, LQTLVLRQNRLKSLEKTGELLLTLEN, LNNLDISKNNFLSMPETCRWPGK, MKQLNLSSTRVHSLTQCLPQ, TLEILDVSNNNLDSFSLILPQ, LKELYISRNKLKTLPDASFLPV, and LSVMRISRNIINTFSKEQLDSFQQ. The N-linked (GlcNAc...) asparagine glycan is linked to Asn114. An N-linked (GlcNAc...) asparagine glycan is attached at Asn199. A glycan (N-linked (GlcNAc...) asparagine) is linked at Asn248. A disulfide bond links Cys353 and Cys382. Cys432 and Cys454 are oxidised to a cystine. Residue Asn442 is glycosylated (N-linked (GlcNAc...) asparagine). Residues 525 to 579 enclose the LRRCT domain; that stretch reads LKTLEAGGNNFICSCDFLSFTQGQQALGRVLVDWPAEYRCDSPSHVRGQRVQDAR. The chain crosses the membrane as a helical span at residues 588 to 608; that stretch reads AAVVSAACCALFLLLLLTGVL. The Cytoplasmic segment spans residues 609-784; the sequence is CHRFHGLWYM…WLNLRAAIRS (176 aa). The TIR domain occupies 639 to 782; sequence ICYDAFVSYS…GFWLNLRAAI (144 aa). A Glycyl lysine isopeptide (Lys-Gly) (interchain with G-Cter in ubiquitin) cross-link involves residue Lys754. The ATG16L1-binding motif motif lies at 761-778; the sequence is YLEWPVDETQQEGFWLNL.

This sequence belongs to the Toll-like receptor family. As to quaternary structure, interacts with LY96, TLR1 and TLR6 (via extracellular domain). TLR2 seems to exist in heterodimers with either TLR1 or TLR6 before stimulation by the ligand. The heterodimers form bigger oligomers in response to their corresponding ligands as well as further heterotypic associations with other receptors such as CD14 and/or CD36. Binds MYD88 (via TIR domain). Interacts with TICAM1. Interacts with CNPY3. Interacts with ATG16L1. Interacts with PPP1R11. Interacts with TICAM2. Interacts with TIRAP. Ubiquitinated at Lys-754 by PPP1R11, leading to its degradation. Deubiquitinated by USP2. In terms of processing, glycosylation of Asn-442 is critical for secretion of the N-terminal ectodomain of TLR2.

The protein resides in the membrane. It is found in the cytoplasmic vesicle. It localises to the phagosome membrane. Its subcellular location is the membrane raft. Its function is as follows. Cooperates with LY96 to mediate the innate immune response to bacterial lipoproteins and other microbial cell wall components. Cooperates with TLR1 or TLR6 to mediate the innate immune response to bacterial lipoproteins or lipopeptides. Acts via MYD88 and TRAF6, leading to NF-kappa-B activation, cytokine secretion and the inflammatory response. May also promote apoptosis in response to lipoproteins. Forms activation clusters composed of several receptors depending on the ligand, these clusters trigger signaling from the cell surface and subsequently are targeted to the Golgi in a lipid-raft dependent pathway. Forms the cluster TLR2:TLR6:CD14:CD36 in response to diacylated lipopeptides and TLR2:TLR1:CD14 in response to triacylated lipopeptides. This Bubalus bubalis (Domestic water buffalo) protein is Toll-like receptor 2 (TLR2).